The chain runs to 229 residues: Large ribosomal subunit protein uL1 (229 aa).

It belongs to the universal ribosomal protein uL1 family. As to quaternary structure, part of the 50S ribosomal subunit.

Its function is as follows. Binds directly to 23S rRNA. The L1 stalk is quite mobile in the ribosome, and is involved in E site tRNA release. Protein L1 is also a translational repressor protein, it controls the translation of the L11 operon by binding to its mRNA. This is Large ribosomal subunit protein uL1 from Mycoplasmopsis pulmonis (strain UAB CTIP) (Mycoplasma pulmonis).